Reading from the N-terminus, the 469-residue chain is Equisetin cluster transcription factor eqxR (469 aa).

The segment at residues 13–47 is a DNA-binding region (zn(2)-C6 fungal-type); the sequence is CDRCRSHKLKCTVAPENSRSGSNRCTRCIRAQVTC. The segment at 58–84 is disordered; it reads STNVKKADIKSGTNSQETTSMQASTIV. Polar residues predominate over residues 68–82; that stretch reads SGTNSQETTSMQAST.

The protein localises to the nucleus. Functionally, transcription factor that regulates the expression of the gene cluster that mediates the biosynthesis of Equisetin. This is Equisetin cluster transcription factor eqxR from Fusarium heterosporum.